The chain runs to 103 residues: Pyrimidine/purine nucleoside phosphorylase (103 aa).

Belongs to the nucleoside phosphorylase PpnP family.

The enzyme catalyses a purine D-ribonucleoside + phosphate = a purine nucleobase + alpha-D-ribose 1-phosphate. The catalysed reaction is adenosine + phosphate = alpha-D-ribose 1-phosphate + adenine. It carries out the reaction cytidine + phosphate = cytosine + alpha-D-ribose 1-phosphate. It catalyses the reaction guanosine + phosphate = alpha-D-ribose 1-phosphate + guanine. The enzyme catalyses inosine + phosphate = alpha-D-ribose 1-phosphate + hypoxanthine. The catalysed reaction is thymidine + phosphate = 2-deoxy-alpha-D-ribose 1-phosphate + thymine. It carries out the reaction uridine + phosphate = alpha-D-ribose 1-phosphate + uracil. It catalyses the reaction xanthosine + phosphate = alpha-D-ribose 1-phosphate + xanthine. Functionally, catalyzes the phosphorolysis of diverse nucleosides, yielding D-ribose 1-phosphate and the respective free bases. Can use uridine, adenosine, guanosine, cytidine, thymidine, inosine and xanthosine as substrates. Also catalyzes the reverse reactions. The sequence is that of Pyrimidine/purine nucleoside phosphorylase from Cupriavidus metallidurans (strain ATCC 43123 / DSM 2839 / NBRC 102507 / CH34) (Ralstonia metallidurans).